Reading from the N-terminus, the 247-residue chain is Cytochrome c oxidase subunit 2 (247 aa).

A signal peptide spans 1-11; it reads MFYLLNSIIMN. At 12-38 the chain is on the mitochondrial intermembrane side; sequence DVPTPYGMYFQDSATPNQEGILELHDN. The chain crosses the membrane as a helical span at residues 39 to 59; that stretch reads IMFYLFIILGLVSWLLFTIVR. The Mitochondrial matrix segment spans residues 60 to 78; sequence TYSKNPIAYKYIKHGQTIE. The chain crosses the membrane as a helical span at residues 79 to 101; it reads IIWTIFPAVILLIIAFPSFILLY. Residues 102 to 247 lie on the Mitochondrial intermembrane side of the membrane; it reads LCDEVISPAM…PAFLEWLNEQ (146 aa). The Cu cation site is built by His-182, Cys-217, Glu-219, Cys-221, His-225, and Met-228. Glu-219 provides a ligand contact to Mg(2+).

Belongs to the cytochrome c oxidase subunit 2 family. In terms of assembly, component of the cytochrome c oxidase (complex IV, CIV), a multisubunit enzyme composed of a catalytic core of 3 subunits and several supernumerary subunits. The complex exists as a monomer or a dimer and forms supercomplexes (SCs) in the inner mitochondrial membrane with ubiquinol-cytochrome c oxidoreductase (cytochrome b-c1 complex, complex III, CIII). Cu cation is required as a cofactor. The signal sequence of COX2 is processed by IMP1.

It localises to the mitochondrion inner membrane. The catalysed reaction is 4 Fe(II)-[cytochrome c] + O2 + 8 H(+)(in) = 4 Fe(III)-[cytochrome c] + 2 H2O + 4 H(+)(out). Its function is as follows. Component of the cytochrome c oxidase, the last enzyme in the mitochondrial electron transport chain which drives oxidative phosphorylation. The respiratory chain contains 3 multisubunit complexes succinate dehydrogenase (complex II, CII), ubiquinol-cytochrome c oxidoreductase (cytochrome b-c1 complex, complex III, CIII) and cytochrome c oxidase (complex IV, CIV), that cooperate to transfer electrons derived from NADH and succinate to molecular oxygen, creating an electrochemical gradient over the inner membrane that drives transmembrane transport and the ATP synthase. Cytochrome c oxidase is the component of the respiratory chain that catalyzes the reduction of oxygen to water. Electrons originating from reduced cytochrome c in the intermembrane space (IMS) are transferred via the dinuclear copper A center (CU(A)) of subunit 2 and heme A of subunit 1 to the active site in subunit 1, a binuclear center (BNC) formed by heme A3 and copper B (CU(B)). The BNC reduces molecular oxygen to 2 water molecules using 4 electrons from cytochrome c in the IMS and 4 protons from the mitochondrial matrix. The sequence is that of Cytochrome c oxidase subunit 2 (COX2) from Kluyveromyces lactis (strain ATCC 8585 / CBS 2359 / DSM 70799 / NBRC 1267 / NRRL Y-1140 / WM37) (Yeast).